A 340-amino-acid chain; its full sequence is Protein RecA (340 aa).

74–81 (GPESSGKT) contributes to the ATP binding site.

This sequence belongs to the RecA family.

It localises to the cytoplasm. Can catalyze the hydrolysis of ATP in the presence of single-stranded DNA, the ATP-dependent uptake of single-stranded DNA by duplex DNA, and the ATP-dependent hybridization of homologous single-stranded DNAs. It interacts with LexA causing its activation and leading to its autocatalytic cleavage. In Porphyromonas gingivalis (strain ATCC 33277 / DSM 20709 / CIP 103683 / JCM 12257 / NCTC 11834 / 2561), this protein is Protein RecA.